We begin with the raw amino-acid sequence, 364 residues long: tRNA 2-selenouridine synthase (364 aa).

One can recognise a Rhodanese domain in the interval 14–136; the sequence is VLNNTPLIDV…AFRNWLMQET (123 aa). Cys-97 functions as the S-selanylcysteine intermediate in the catalytic mechanism.

The protein belongs to the SelU family. As to quaternary structure, monomer.

The enzyme catalyses 5-methylaminomethyl-2-thiouridine(34) in tRNA + selenophosphate + (2E)-geranyl diphosphate + H2O + H(+) = 5-methylaminomethyl-2-selenouridine(34) in tRNA + (2E)-thiogeraniol + phosphate + diphosphate. It carries out the reaction 5-methylaminomethyl-2-thiouridine(34) in tRNA + (2E)-geranyl diphosphate = 5-methylaminomethyl-S-(2E)-geranyl-thiouridine(34) in tRNA + diphosphate. The catalysed reaction is 5-methylaminomethyl-S-(2E)-geranyl-thiouridine(34) in tRNA + selenophosphate + H(+) = 5-methylaminomethyl-2-(Se-phospho)selenouridine(34) in tRNA + (2E)-thiogeraniol. It catalyses the reaction 5-methylaminomethyl-2-(Se-phospho)selenouridine(34) in tRNA + H2O = 5-methylaminomethyl-2-selenouridine(34) in tRNA + phosphate. Functionally, involved in the post-transcriptional modification of the uridine at the wobble position (U34) of tRNA(Lys), tRNA(Glu) and tRNA(Gln). Catalyzes the conversion of 2-thiouridine (S2U-RNA) to 2-selenouridine (Se2U-RNA). Acts in a two-step process involving geranylation of 2-thiouridine (S2U) to S-geranyl-2-thiouridine (geS2U) and subsequent selenation of the latter derivative to 2-selenouridine (Se2U) in the tRNA chain. The chain is tRNA 2-selenouridine synthase from Sulfurovum sp. (strain NBC37-1).